The sequence spans 919 residues: Eukaryotic translation initiation factor 3 subunit C (919 aa).

Positions 1-28 (MSRFFANGSDSESESSEEEVQAPNFNKA) are disordered. Positions 11–20 (SESESSEEEV) are enriched in acidic residues. A phosphoserine mark is found at S34, S165, and S177. Residues 154–275 (LSRFRENPQE…EQKIKLRKRA (122 aa)) form a disordered region. Over residues 162-171 (QEESENEDEE) the composition is skewed to acidic residues. Residues 210–236 (ADDEDSDESIDWDPDTESETESSEDEN) show a composition bias toward acidic residues. Positions 241-269 (MRERFLKRSTEKDDKDDDKRKDKRKEQKI) are enriched in basic and acidic residues. In terms of domain architecture, PCI spans 640-816 (FHMHINLELL…ETVVMHRSEP (177 aa)). Residues 848–919 (FFQRGNMGNR…QQQVQTIDEE (72 aa)) form a disordered region. Residues 883 to 894 (QRNRNQRGHHKN) are compositionally biased toward basic residues. Positions 895–919 (QQNQNQQQQQQHQREQQQVQTIDEE) are enriched in low complexity.

This sequence belongs to the eIF-3 subunit C family. In terms of assembly, component of the eukaryotic translation initiation factor 3 (eIF-3) complex. The eIF-3 complex interacts with pix.

Its subcellular location is the cytoplasm. Functionally, component of the eukaryotic translation initiation factor 3 (eIF-3) complex, which is involved in protein synthesis of a specialized repertoire of mRNAs and, together with other initiation factors, stimulates binding of mRNA and methionyl-tRNAi to the 40S ribosome. The eIF-3 complex specifically targets and initiates translation of a subset of mRNAs involved in cell proliferation. In Drosophila willistoni (Fruit fly), this protein is Eukaryotic translation initiation factor 3 subunit C.